Consider the following 310-residue polypeptide: MSQNNPLRALLDKQDILLLDGAMATELEARGCNLADSLWSAKVLVENPELIREVHLDYYRAGAQCAITASYQATPAGFAARGLDEAQSKALIGKSVELARKAREAYLAENPQAGTLLVAGSVGPYGAYLADGSEYRGDYHCSVEAFQAFHRPRVEALLDAGADLLACETLPNFSEIEALAELLTAYPRARAWFSFTLRDSEHLSDGTPLRDVVALLAGYPQVVALGINCIALENTTAALQHLHGLTVLPLVVYPNSGEHYDAVSKTWHHHGEHCAQLADYLPQWQAAGARLIGGCCRTTPADIAALKARS.

Positions 1 to 310 (MSQNNPLRAL…ADIAALKARS (310 aa)) constitute a Hcy-binding domain. Zn(2+)-binding residues include C229, C295, and C296.

In terms of assembly, monomer. Requires Zn(2+) as cofactor.

The enzyme catalyses S-methyl-L-methionine + L-homocysteine = 2 L-methionine + H(+). Functionally, catalyzes methyl transfer from S-methylmethionine or S-adenosylmethionine (less efficient) to homocysteine, selenohomocysteine and less efficiently selenocysteine. The sequence is that of Homocysteine S-methyltransferase (mmuM) from Escherichia coli (strain K12).